The following is a 499-amino-acid chain: Cryptochrome-1 (499 aa).

FAD is bound by residues Arg-190, Ser-218, Ser-220, Gln-261, His-328, 360–362 (DAD), Cys-366, and Asn-369.

This sequence belongs to the DNA photolyase class-1 family. Interacts with tim and per; promoted by light conditions. FAD serves as cofactor.

Its subcellular location is the cytoplasm. The protein resides in the perinuclear region. The protein localises to the nucleus. Functionally, blue light-dependent regulator that is the input of the circadian feedback loop. Has no photolyase activity for cyclobutane pyrimidine dimers or 6-4 photoproducts. Regulation of expression by light suggests a role in photoreception for locomotor activity rhythms. Functions, together with per, as a transcriptional repressor required for the oscillation of peripheral circadian clocks and for the correct specification of clock cells. Genes directly activated by the transcription factors Clock (Clk) and cycle (cyc) are repressed by cry. The sequence is that of Cryptochrome-1 from Culex quinquefasciatus (Southern house mosquito).